Reading from the N-terminus, the 630-residue chain is Plastin-3 (630 aa).

EF-hand domains are found at residues 12–47 and 52–87; these read DELD…ANMP and KVRE…VKSS. Residues Asp25, Asn27, Asn29, Glu36, Asp65, Asn67, Asp69, Lys71, and Glu76 each contribute to the Ca(2+) site. Actin-binding stretches follow at residues 109-382 and 383-627; these read TSEL…ALTK and PENQ…GRGM. 2 Calponin-homology (CH) domains span residues 123–239 and 267–378; these read EEEK…KIGL and LSPE…NKYP. A phosphoserine mark is found at Ser268, Ser293, Ser326, and Ser339. Residue Thr391 is modified to Phosphothreonine. 2 consecutive Calponin-homology (CH) domains span residues 397 to 506 and 518 to 627; these read TREE…RRYT and KAND…GRGM.

Monomer. As to expression, expressed in a variety of organs, including muscle, brain, uterus and esophagus.

It is found in the cytoplasm. In terms of biological role, actin-bundling protein. This Homo sapiens (Human) protein is Plastin-3 (PLS3).